The primary structure comprises 287 residues: Protease HtpX homolog (287 aa).

2 consecutive transmembrane segments (helical) span residues 5–25 (IRTGLLMAALTALFVAIGYWI) and 28–48 (GAGAAIALAFAAAGNFVAYWV). Position 131 (His-131) interacts with Zn(2+). Glu-132 is a catalytic residue. His-135 is a Zn(2+) binding site. A run of 2 helical transmembrane segments spans residues 146 to 166 (VTATLAGAIGMISNLAIFFGG) and 174 to 194 (PFAGIAGLLLLLLAPLTATLV). Residue Glu-203 coordinates Zn(2+).

Belongs to the peptidase M48B family. Requires Zn(2+) as cofactor.

Its subcellular location is the cell inner membrane. The chain is Protease HtpX homolog from Acidiphilium cryptum (strain JF-5).